Consider the following 160-residue polypeptide: Endoribonuclease YbeY (160 aa).

Zn(2+) contacts are provided by His-121, His-125, and His-131.

The protein belongs to the endoribonuclease YbeY family. Zn(2+) serves as cofactor.

It is found in the cytoplasm. Functionally, single strand-specific metallo-endoribonuclease involved in late-stage 70S ribosome quality control and in maturation of the 3' terminus of the 16S rRNA. This Hydrogenovibrio crunogenus (strain DSM 25203 / XCL-2) (Thiomicrospira crunogena) protein is Endoribonuclease YbeY.